We begin with the raw amino-acid sequence, 377 residues long: Glutamate 5-kinase (377 aa).

Lysine 17 contributes to the ATP binding site. Positions 56, 143, and 155 each coordinate substrate. 217–223 (SGGMFSK) is a binding site for ATP. In terms of domain architecture, PUA spans 282–360 (AGDLVIDDGA…CEIESILGKC (79 aa)).

It belongs to the glutamate 5-kinase family.

It is found in the cytoplasm. It carries out the reaction L-glutamate + ATP = L-glutamyl 5-phosphate + ADP. The protein operates within amino-acid biosynthesis; L-proline biosynthesis; L-glutamate 5-semialdehyde from L-glutamate: step 1/2. Catalyzes the transfer of a phosphate group to glutamate to form L-glutamate 5-phosphate. The sequence is that of Glutamate 5-kinase from Maridesulfovibrio salexigens (strain ATCC 14822 / DSM 2638 / NCIMB 8403 / VKM B-1763) (Desulfovibrio salexigens).